Consider the following 168-residue polypeptide: Cytochrome c-type biogenesis protein CcmE (168 aa).

At 1 to 7 the chain is on the cytoplasmic side; sequence MTRKKRR. A helical; Signal-anchor for type II membrane protein membrane pass occupies residues 8-28; sequence LYMLGLALLGLGTATALTLSA. The Periplasmic portion of the chain corresponds to 29–168; sequence FEENIVFFYS…KVHATTTLKP (140 aa). Heme contacts are provided by histidine 122 and tyrosine 126. The disordered stretch occupies residues 149–168; it reads SIYTPADSDDKVHATTTLKP.

The protein belongs to the CcmE/CycJ family.

Its subcellular location is the cell inner membrane. In terms of biological role, heme chaperone required for the biogenesis of c-type cytochromes. Transiently binds heme delivered by CcmC and transfers the heme to apo-cytochromes in a process facilitated by CcmF and CcmH. The protein is Cytochrome c-type biogenesis protein CcmE of Rhodospirillum centenum (strain ATCC 51521 / SW).